The following is a 275-amino-acid chain: Translation initiation factor 2 subunit alpha (275 aa).

The 72-residue stretch at Gly12 to Lys83 folds into the S1 motif domain.

This sequence belongs to the eIF-2-alpha family. In terms of assembly, heterotrimer composed of an alpha, a beta and a gamma chain.

Functionally, eIF-2 functions in the early steps of protein synthesis by forming a ternary complex with GTP and initiator tRNA. The protein is Translation initiation factor 2 subunit alpha of Thermococcus onnurineus (strain NA1).